The following is an 81-amino-acid chain: MASVEEKVKQIIVEQLGVDEGEVTPNASFVDDLGADSLDTVELVMAFEEAFEIEIPDEDAEKIRTVKDAVDYITAHAKGGK.

The Carrier domain maps to 2-77 (ASVEEKVKQI…DAVDYITAHA (76 aa)). Ser-37 is subject to O-(pantetheine 4'-phosphoryl)serine.

This sequence belongs to the acyl carrier protein (ACP) family. In terms of processing, 4'-phosphopantetheine is transferred from CoA to a specific serine of apo-ACP by AcpS. This modification is essential for activity because fatty acids are bound in thioester linkage to the sulfhydryl of the prosthetic group.

It is found in the cytoplasm. It participates in lipid metabolism; fatty acid biosynthesis. In terms of biological role, carrier of the growing fatty acid chain in fatty acid biosynthesis. The sequence is that of Acyl carrier protein from Koribacter versatilis (strain Ellin345).